We begin with the raw amino-acid sequence, 259 residues long: FAD-linked sulfhydryl oxidase (259 aa).

This sequence belongs to the baculoviridae p33 family. Homodimer.

It localises to the host cytoplasm. The protein resides in the host nucleus. The enzyme catalyses 2 R'C(R)SH + O2 = R'C(R)S-S(R)CR' + H2O2. Its function is as follows. Functional FAD-linked sulfhydryl oxidase that is required for infectious budded virion (BV) production and for the formation of enveloped occluded virion (ODV). This is FAD-linked sulfhydryl oxidase (P33) from Lepidoptera (butterflies and moths).